The sequence spans 105 residues: Large ribosomal subunit protein bL21 (105 aa).

This sequence belongs to the bacterial ribosomal protein bL21 family. Part of the 50S ribosomal subunit. Contacts protein L20.

Functionally, this protein binds to 23S rRNA in the presence of protein L20. The chain is Large ribosomal subunit protein bL21 from Methylobacterium sp. (strain 4-46).